The primary structure comprises 283 residues: Bis(5'-nucleosyl)-tetraphosphatase, symmetrical (283 aa).

Belongs to the Ap4A hydrolase family.

The catalysed reaction is P(1),P(4)-bis(5'-adenosyl) tetraphosphate + H2O = 2 ADP + 2 H(+). Functionally, hydrolyzes diadenosine 5',5'''-P1,P4-tetraphosphate to yield ADP. In Pseudomonas fluorescens (strain SBW25), this protein is Bis(5'-nucleosyl)-tetraphosphatase, symmetrical.